Reading from the N-terminus, the 361-residue chain is Phospho-N-acetylmuramoyl-pentapeptide-transferase (361 aa).

A run of 10 helical transmembrane segments spans residues 28–48 (LAII…IEFL), 74–94 (TMGG…LADL), 99–119 (IWIT…DDYA), 133–153 (SKLL…EYLD), 168–188 (LSLD…VGSS), 203–223 (VPIA…GNLI), 236–256 (TGEL…FLWF), 263–283 (VFMG…ISVI), 288–308 (IVLA…ILQV), and 338–358 (KVVI…LSSL).

Belongs to the glycosyltransferase 4 family. MraY subfamily. Requires Mg(2+) as cofactor.

It is found in the cell inner membrane. It carries out the reaction UDP-N-acetyl-alpha-D-muramoyl-L-alanyl-gamma-D-glutamyl-meso-2,6-diaminopimeloyl-D-alanyl-D-alanine + di-trans,octa-cis-undecaprenyl phosphate = di-trans,octa-cis-undecaprenyl diphospho-N-acetyl-alpha-D-muramoyl-L-alanyl-D-glutamyl-meso-2,6-diaminopimeloyl-D-alanyl-D-alanine + UMP. Its pathway is cell wall biogenesis; peptidoglycan biosynthesis. In terms of biological role, catalyzes the initial step of the lipid cycle reactions in the biosynthesis of the cell wall peptidoglycan: transfers peptidoglycan precursor phospho-MurNAc-pentapeptide from UDP-MurNAc-pentapeptide onto the lipid carrier undecaprenyl phosphate, yielding undecaprenyl-pyrophosphoryl-MurNAc-pentapeptide, known as lipid I. The sequence is that of Phospho-N-acetylmuramoyl-pentapeptide-transferase from Rickettsia africae (strain ESF-5).